The chain runs to 123 residues: Large ribosomal subunit protein uL18 (123 aa).

It belongs to the universal ribosomal protein uL18 family. Part of the 50S ribosomal subunit; part of the 5S rRNA/L5/L18/L25 subcomplex. Contacts the 5S and 23S rRNAs.

Functionally, this is one of the proteins that bind and probably mediate the attachment of the 5S RNA into the large ribosomal subunit, where it forms part of the central protuberance. The chain is Large ribosomal subunit protein uL18 from Chlamydia trachomatis serovar L2 (strain ATCC VR-902B / DSM 19102 / 434/Bu).